The chain runs to 253 residues: 5-oxoprolinase subunit A (253 aa).

Belongs to the LamB/PxpA family. In terms of assembly, forms a complex composed of PxpA, PxpB and PxpC.

The catalysed reaction is 5-oxo-L-proline + ATP + 2 H2O = L-glutamate + ADP + phosphate + H(+). In terms of biological role, catalyzes the cleavage of 5-oxoproline to form L-glutamate coupled to the hydrolysis of ATP to ADP and inorganic phosphate. The protein is 5-oxoprolinase subunit A of Bacillus licheniformis (strain ATCC 14580 / DSM 13 / JCM 2505 / CCUG 7422 / NBRC 12200 / NCIMB 9375 / NCTC 10341 / NRRL NRS-1264 / Gibson 46).